We begin with the raw amino-acid sequence, 478 residues long: MLNALTRDRLVSEMKQGWKLAAAIGLMAVSFGAAHAQDADEALIKRGEYVARLSDCIACHTALHGQPYAGGLEIKSPIGTIYSTNITPDPEHGIGNYTLEDFTKALRKGIRKDGATVYPAMPYPEFARLSDDDIRAMYAFFMHGVKPVALQNKAPDISWPLSMRWPLGMWRAMFVPSMTPGVDKSISDPEVARGEYLVNGPGHCGECHTPRGFGMQVKAYGTAGGNAYLAGGAPIDNWIAPSLRSNSDTGLGRWSEDDIVTFLKSGRIDHSAVFGGMADVVAYSTQHWSDDDLRATAKYLKSMPAVPEGKNLGQDDGQTTALLNKGGQGNAGAEVYLHNCAICHMNDGTGVNRMFPPLAGNPVVITDDPTSLANVVAFGGILPPTNSAPSAVAMPGFKNHLSDQEMADVVNFMRKGWGNNAPGTVSASDIQKLRTTGAPVSTAGWNVSSKGWMAYMPQPYGEDWTFSPQTHTGVDDAQ.

An N-terminal signal peptide occupies residues 1-36 (MLNALTRDRLVSEMKQGWKLAAAIGLMAVSFGAAHA). Pyrrolidone carboxylic acid is present on glutamine 37. 3 consecutive Cytochrome c domains span residues 42–145 (ALIK…MHGV), 189–304 (PEVA…KSMP), and 327–417 (GQGN…RKGW). The heme c site is built by cysteine 56, cysteine 59, histidine 60, cysteine 204, cysteine 207, histidine 208, cysteine 340, cysteine 343, and histidine 344.

In terms of assembly, the alcohol dehydrogenase multicomponent enzyme system is composed of a dehydrogenase subunit I (AdhA), a cytochrome c subunit II (AdhB) and a subunit III (AdhS). Requires heme c as cofactor.

Its subcellular location is the cell membrane. The catalysed reaction is ethanol + a ubiquinone = a ubiquinol + acetaldehyde. 2,6-dichloro-4-dicyanovinylphenol (PC16) and antimycin A inhibit ubiquinol oxidation activity more selectively than the ubiquinone reductase activity. Functionally, cytochrome c component of the alcohol dehydrogenase multicomponent enzyme system which is involved in the production of acetic acid and in the ethanol oxidase respiratory chain. Quinohemoprotein alcohol dehydrogenase (ADH) catalyzes the oxidation of ethanol to acetaldehyde by transferring electrons to the ubiquinone embedded in the membrane phospholipids. The electrons transfer from ethanol to membranous ubiquinone occurs from pyrroloquinoline quinone (PQQ) to one heme c in subunit I (AdhA), and finally to two heme c in subunit II (AdhB). Besides ubiquinone reduction, ADH also has a ubiquinol (QH2) oxidation reaction which mediates electron transfer from ubiquinol to the non-energy generating bypass oxidase system. The electrons transfer occurs from ubiquinol (QH2) to the additional heme c within subunit II (AdhB). Also able to use quinone analogs such as 2,3-dimethoxy-5-methyl-6-n-decyl-1,4-benzoquinone (DB) and 2,3-dimethoxy-5-methyl-6-n-pentyl-1,4-benzoquinone (PB). This is Alcohol dehydrogenase (quinone), cytochrome c subunit from Gluconobacter oxydans (strain 621H) (Gluconobacter suboxydans).